Consider the following 139-residue polypeptide: Centromere protein S (139 aa).

The disordered stretch occupies residues 99-139 (ELASSNMEQKEKKKKKSSAAKGRKTEENETPVTESEDSNMA). Basic residues predominate over residues 110 to 120 (KKKKKSSAAKG).

The protein belongs to the TAF9 family. CENP-S/MHF1 subfamily. Heterodimer with CENPX, sometimes called MHF; this interaction stabilizes both partners. MHF heterodimers can assemble to form tetrameric structures. MHF also coassemble with CENPT-CENPW heterodimers at centromeres to form the tetrameric CENP-T-W-S-X complex. Forms a discrete complex with FANCM and CENPX, called FANCM-MHF; this interaction, probably mediated by direct binding between CENPS and FANCM, leads to synergistic activation of double-stranded DNA binding and strongly stimulates FANCM-mediated DNA remodeling. Recruited by FANCM to the Fanconi anemia (FA) core complex, which consists of CENPS, CENPX, FANCA, FANCB, FANCC, FANCE, FANCF, FANCG, FANCL, FANCM, FAAP24 and FAAP100. The FA core complex associates with Bloom syndrome (BLM) complex, which consists of at least BLM, DNA topoisomerase 3-alpha (TOP3A), RMI1/BLAP75, RPA1/RPA70 and RPA2/RPA32. The super complex between FA and BLM is called BRAFT. Component of the CENPA-CAD complex, composed of CENPI, CENPK, CENPL, CENPO, CENPP, CENPQ, CENPR and CENPS. The CENPA-CAD complex is probably recruited on centromeres by the CENPA-NAC complex, at least composed of CENPA, CENPC, CENPH, CENPM, CENPN, CENPT and CENPU.

It localises to the nucleus. It is found in the chromosome. Its subcellular location is the centromere. The protein localises to the kinetochore. Its function is as follows. DNA-binding component of the Fanconi anemia (FA) core complex. Required for the normal activation of the FA pathway, leading to monoubiquitination of the FANCI-FANCD2 complex in response to DNA damage, cellular resistance to DNA cross-linking drugs, and prevention of chromosomal breakage. In complex with CENPX (MHF heterodimer), crucial cofactor for FANCM in both binding and ATP-dependent remodeling of DNA. Stabilizes FANCM. In complex with CENPX and FANCM (but not other FANC proteins), rapidly recruited to blocked forks and promotes gene conversion at blocked replication forks. In complex with CENPT, CENPW and CENPX (CENP-T-W-S-X heterotetramer), involved in the formation of a functional kinetochore outer plate, which is essential for kinetochore-microtubule attachment and faithful mitotic progression. As a component of MHF and CENP-T-W-S-X complexes, binds DNA and bends it to form a nucleosome-like structure. DNA-binding function is fulfilled in the presence of CENPX, with the following preference for DNA substates: Holliday junction &gt; double-stranded &gt; splay arm &gt; single-stranded. Does not bind DNA on its own. The chain is Centromere protein S (CENPS) from Gallus gallus (Chicken).